The chain runs to 139 residues: Natriuretic peptide Mc-NP (139 aa).

The first 25 residues, Met1–Gly25, serve as a signal peptide directing secretion. Residues Lys26–Glu75 constitute a propeptide that is removed on maturation. The tract at residues Val45–Arg72 is disordered. Cys86 and Cys102 are joined by a disulfide. A propeptide spanning residues Ile117–Gly139 is cleaved from the precursor.

It belongs to the natriuretic peptide family. As to expression, expressed by the venom gland.

It is found in the secreted. In terms of biological role, snake venom natriuretic peptide that dose-dependently induces the rapid relaxation of rat aortic strips phenylephrine-precontracted. Acts by stimulating cGMP production in a dose-dependent manner (by probably activating NPR1 and/or NPR2). May also show potent hypotensive effects. A synthetic peptide (AA 77-108, where the Cys-95 is replaced by a Ser) increases sodium excretion and urinary volume in rat kidneys. The polypeptide is Natriuretic peptide Mc-NP (Micrurus corallinus (Brazilian coral snake)).